The sequence spans 227 residues: Protein FAM3C (227 aa).

The N-terminal stretch at 1 to 30 (MMRAGGLLKLGVLVSVLFVAVFLAFELLES) is a signal peptide. Disulfide bonds link Cys-58/Cys-86 and Cys-64/Cys-221. The GG-type lectin domain maps to 67–225 (DHFAFKITSG…LEMEGCIPIK (159 aa)).

It belongs to the FAM3 family.

It is found in the secreted. In terms of biological role, involved in retinal laminar formation. The polypeptide is Protein FAM3C (fam3c) (Danio rerio (Zebrafish)).